A 468-amino-acid chain; its full sequence is Mothers against decapentaplegic homolog 1 (468 aa).

N-acetylmethionine is present on methionine 1. Residues proline 12–proline 136 form the MH1 domain. Zn(2+) contacts are provided by cysteine 64, cysteine 109, cysteine 121, and histidine 126. The tract at residues asparagine 162–methionine 246 is disordered. Low complexity predominate over residues proline 188–serine 210. Positions aspartate 221 to aspartate 232 are enriched in pro residues. A compositionally biased stretch (polar residues) spans aspartate 237 to methionine 246. Positions tryptophan 274–serine 468 constitute an MH2 domain. Threonine 325 carries the post-translational modification Phosphothreonine; by MINK1, TNIK and MAP4K4. Residues lysine 421–aspartate 431 form an L3 loop region. Residues serine 466 and serine 468 each carry the phosphoserine modification.

Belongs to the dwarfin/SMAD family. Found in a complex with SMAD4 and YY1. Interacts with HGS, NANOG and ZCCHC12. Upon C-terminus phosphorylation: forms trimers with another SMAD1 and the co-SMAD SMAD4. Interacts with PEBP2-alpha subunit, CREB-binding protein (CBP), p300, SMURF1, SMURF2, USP15 and HOXC8. Associates with ZNF423 or ZNF521 in response to BMP2 leading to activate transcription of BMP target genes. Interacts with SKOR1. Interacts (via MH2 domain) with LEMD3. Binding to LEMD3 results in at least a partial reduction of receptor-mediated phosphorylation. Forms a ternary complex with PSMB4 and OAZ1 before PSMB4 is incorporated into the 20S proteasome. Interacts (via MH2 domain) with FAM83G (via MH2 domain); in a SMAD4-independent manner. Interacts with ZC3H3. Interacts with TMEM119. Interacts (via MH1 and MH2 domains) with ZNF8. Interacts with RANBP3L; the interaction increases when SMAD1 is not phosphorylated and mediates SMAD1 nuclear export. Interacts with EGR1; this interaction inhibits SMAD1 dephosphorylation. Interacts with SMAD6. Interacts with YAP1. Interacts with MTMR4; negatively regulates BMP signaling through SMAD1 dephosphorylation and retention in endosomes. Post-translationally, phosphorylation of the C-terminal SVS motif by BMP type 1 receptor kinase activates SMAD1 by promoting dissociation from the receptor and trimerization with SMAD4. Phosphorylation by ERK2 MAP kinase in response to EGF or HGF prevents SMAD1 nuclear accumulation and transcriptional activity in response to BMP. Dephosphorylation, probably by PPM1A, induces its export from the nucleus to the cytoplasm. Dephosphorylation is inhibited by association with EGR1. Phosphorylation by CDK8/9 creates binding sites for YAP1, and subsequent phosphorylation by GSK3 switches off YAP1 binding and adds binding sites for SMURF1. In terms of processing, ubiquitinated by SMAD-specific E3 ubiquitin ligase SMURF1, leading to its degradation. Monoubiquitinated, leading to prevent DNA-binding. Deubiquitination by USP15 alleviates inhibition and promotes activation of TGF-beta target genes. Dephosphorylation, probably by PPM1A, induces its export from the nucleus to the cytoplasm. Phospho-SMAD1 is ubiquitinated by CHIP leading to disruption of the SMAD1-SMAD4 complex. In terms of tissue distribution, ubiquitous; present in liver, lung, stomach and spleen with lower level in heart, testes and skeletal muscle.

The protein localises to the cytoplasm. Its subcellular location is the nucleus. In terms of biological role, transcriptional modulator that plays a role in various cellular processes, including embryonic development, cell differentiation, and tissue homeostasis. Upon BMP ligand binding to their receptors at the cell surface, is phosphorylated by activated type I BMP receptors (BMPRIs) and associates with SMAD4 to form an heteromeric complex which translocates into the nucleus acting as transcription factor. In turn, the hetero-trimeric complex recognizes cis-regulatory elements containing Smad Binding Elements (SBEs) to modulate the outcome of the signaling network. SMAD1/OAZ1/PSMB4 complex mediates the degradation of the CREBBP/EP300 repressor SNIP1. Positively regulates BMP4-induced expression of odontogenic development regulator MSX1 following IPO7-mediated nuclear import. This Rattus norvegicus (Rat) protein is Mothers against decapentaplegic homolog 1 (Smad1).